The sequence spans 368 residues: 3-dehydroquinate synthase (368 aa).

NAD(+)-binding positions include 71 to 76 (DGESFK), 105 to 109 (GVIGD), 129 to 130 (TT), Lys142, Lys151, and 169 to 172 (TLRT). 3 residues coordinate Zn(2+): Glu184, His247, and His264.

The protein belongs to the sugar phosphate cyclases superfamily. Dehydroquinate synthase family. Co(2+) serves as cofactor. The cofactor is Zn(2+). Requires NAD(+) as cofactor.

The protein localises to the cytoplasm. It carries out the reaction 7-phospho-2-dehydro-3-deoxy-D-arabino-heptonate = 3-dehydroquinate + phosphate. It functions in the pathway metabolic intermediate biosynthesis; chorismate biosynthesis; chorismate from D-erythrose 4-phosphate and phosphoenolpyruvate: step 2/7. In terms of biological role, catalyzes the conversion of 3-deoxy-D-arabino-heptulosonate 7-phosphate (DAHP) to dehydroquinate (DHQ). The protein is 3-dehydroquinate synthase of Ralstonia pickettii (strain 12J).